Reading from the N-terminus, the 440-residue chain is Glycerophosphocholine cholinephosphodiesterase ENPP6 (440 aa).

A signal peptide spans 1 to 22 (MAVKLGTLLLALALGLAQPASA). 3 residues coordinate substrate: Asp32, Ser71, and Asn92. Zn(2+)-binding residues include Asp32 and Ser71. Catalysis depends on Ser71, which acts as the Nucleophile. Ser71 bears the Phosphoserine mark. Asn100 and Asn118 each carry an N-linked (GlcNAc...) asparagine glycan. Cys142 and Cys154 are joined by a disulfide. Asp193 contacts substrate. The Zn(2+) site is built by Asp193, His197, Asp240, and His241. Residue His241 coordinates substrate. An N-linked (GlcNAc...) asparagine glycan is attached at Asn341. Substrate is bound at residue His354. Zn(2+) is bound at residue His354. The N-linked (GlcNAc...) asparagine glycan is linked to Asn404. Ala418 carries the GPI-anchor amidated alanine lipid modification. Positions 419 to 440 (GTTPPVQPSHCALALILLFLLA) are cleaved as a propeptide — removed in mature form.

Belongs to the nucleotide pyrophosphatase/phosphodiesterase family. As to quaternary structure, homodimer; disulfide-linked. Homotetramer. It depends on Zn(2+) as a cofactor.

The protein resides in the cell membrane. The catalysed reaction is sn-glycerol 3-phosphocholine + H2O = phosphocholine + glycerol + H(+). It catalyses the reaction a 1-acyl-sn-glycero-3-phosphocholine + H2O = a 1-acyl-sn-glycerol + phosphocholine + H(+). It carries out the reaction a 1-O-alkyl-sn-glycero-3-phosphocholine + H2O = a 1-O-alkyl-sn-glycerol + phosphocholine + H(+). The enzyme catalyses 1-dodecanoyl-sn-glycero-3-phosphocholine + H2O = 1-dodecanoyl-sn-glycerol + phosphocholine + H(+). The catalysed reaction is 1-hexadecanoyl-sn-glycero-3-phosphocholine + H2O = 1-hexadecanoyl-sn-glycerol + phosphocholine + H(+). It catalyses the reaction 1-(5Z,8Z,11Z,14Z-eicosatetraenoyl)-sn-glycero-3-phosphocholine + H2O = 1-(5Z,8Z,11Z,14Z-eicosatetraenoyl)-sn-glycerol + phosphocholine + H(+). It carries out the reaction 1-tetradecanoyl-sn-glycero-3-phosphocholine + H2O = 1-tetradecanoyl-sn-glycerol + phosphocholine + H(+). The enzyme catalyses sphing-4-enine-phosphocholine + H2O = sphing-4-enine + phosphocholine + H(+). The catalysed reaction is 1-(9Z-octadecenoyl)-sn-glycero-3-phosphocholine + H2O = 1-(9Z-octadecenoyl)-sn-glycerol + phosphocholine + H(+). It catalyses the reaction 1-(9Z,12Z)-octadecadienoyl-sn-glycero-3-phosphocholine + H2O = 1-(9Z,12Z-octadecadienoyl)-sn-glycerol + phosphocholine + H(+). It carries out the reaction glycero-2-phosphocholine + H2O = phosphocholine + glycerol + H(+). Inhibited by EDTA and EGTA in vitro. Functionally, choline-specific glycerophosphodiesterase that hydrolyzes glycerophosphocholine (GPC) and lysophosphatidylcholine (LPC) and contributes to supplying choline to the cells. Has a preference for LPC with short (12:0 and 14:0) or polyunsaturated (18:2 and 20:4) fatty acids. In vitro, hydrolyzes only choline-containing lysophospholipids, such as sphingosylphosphorylcholine (SPC), platelet-activating factor (PAF) and lysoPAF, but not other lysophospholipids. This Pongo abelii (Sumatran orangutan) protein is Glycerophosphocholine cholinephosphodiesterase ENPP6.